The sequence spans 1298 residues: Histone-lysine N-methyltransferase EHMT1 (1298 aa).

Disordered regions lie at residues 1-111 and 144-192; these read MAAA…HVTA and ASSL…RKLP. Alanine 2 carries the post-translational modification N-acetylalanine. Lysine 22 participates in a covalent cross-link: Glycyl lysine isopeptide (Lys-Gly) (interchain with G-Cter in SUMO1); alternate. Lysine 22 participates in a covalent cross-link: Glycyl lysine isopeptide (Lys-Gly) (interchain with G-Cter in SUMO2); alternate. Positions 38–50 are enriched in basic and acidic residues; it reads SAEKQAGEAHMAA. Composition is skewed to polar residues over residues 54–67 and 76–89; these read TNGS…SSHA and SARV…NTLT. A compositionally biased stretch (basic and acidic residues) spans 96 to 105; it reads VSERDSEAAK. Residues lysine 190, lysine 199, lysine 231, lysine 234, lysine 317, and lysine 327 each participate in a glycyl lysine isopeptide (Lys-Gly) (interchain with G-Cter in SUMO2) cross-link. Positions 211–234 are disordered; the sequence is VVGLHAASKDPREVREARDHKEPK. Basic and acidic residues predominate over residues 217-234; that stretch reads ASKDPREVREARDHKEPK. Positions 339–479 are disordered; the sequence is VNGESLEMDS…QTAPGDSTGY (141 aa). The segment covering 344–360 has biased composition (acidic residues); it reads LEMDSDEDDSEELEEDD. Residues 373–393 show a composition bias toward basic and acidic residues; the sequence is EDSRTSKESMSEADRAQKMDG. Acidic residues predominate over residues 394–416; sequence ESEEEQESVDTGEEEEGGDESDL. Lysine 432 is covalently cross-linked (Glycyl lysine isopeptide (Lys-Gly) (interchain with G-Cter in SUMO2)). Phosphoserine is present on serine 435. Residues 440–452 show a composition bias toward basic residues; sequence PARKRRRRSRKKP. Residues 460-474 are compositionally biased toward polar residues; that stretch reads SYKSSAGSAEQTAPG. Serine 483 is modified (phosphoserine). Residues lysine 492, lysine 559, lysine 644, lysine 659, lysine 684, and lysine 731 each participate in a glycyl lysine isopeptide (Lys-Gly) (interchain with G-Cter in SUMO2) cross-link. Residues 644 to 717 form a disordered region; it reads KADTTSTVTP…TPGLSQGPGK (74 aa). ANK repeat units follow at residues 737-766, 772-801, 805-834, 838-868, 872-901, 905-934, 938-967, and 971-1004; these read FHPK…DPNF, NKRS…NIDT, DQRT…LVDP, EGST…DVNC, GGWT…DINI, EENI…DLHA, HGDS…DVTL, and EGET…DRPS. The interval 905–907 is histone H3K9me binding; sequence EEN. Residues serine 1004 and serine 1048 each carry the phosphoserine modification. The 64-residue stretch at 1060–1123 folds into the Pre-SET domain; sequence QYCVCIDDCS…NCRNRVVQNG (64 aa). Cysteine 1062, cysteine 1064, cysteine 1068, cysteine 1073, cysteine 1075, cysteine 1105, cysteine 1109, cysteine 1111, and cysteine 1115 together coordinate Zn(2+). Positions 1126-1243 constitute an SET domain; sequence ARLQLYRTRD…AGEQLGFDYG (118 aa). S-adenosyl-L-methionine-binding positions include 1136–1138, tyrosine 1173, and 1200–1201; these read MGW and NH. Residues 1162-1181 are interaction with histone H3; that stretch reads DSEADVREEDSYLFDLDNKD. Residue cysteine 1203 coordinates Zn(2+). Residues 1242–1245 form an interaction with histone H3 region; that stretch reads YGER. Cysteine 1256 contributes to the Zn(2+) binding site. Arginine 1257 serves as a coordination point for S-adenosyl-L-methionine. The Zn(2+) site is built by cysteine 1258 and cysteine 1263. A disordered region spans residues 1274 to 1298; that stretch reads QASAAQEAQEDGLPDTSSAAAADPL.

The protein belongs to the class V-like SAM-binding methyltransferase superfamily. In terms of assembly, heterodimer; heterodimerizes with EHMT2. Interacts with WIZ and EHMT2. Part of the E2F6.com-1 complex in G0 phase composed of E2F6, MGA, MAX, TFDP1, CBX3, BAT8, EHMT1, RING1, RNF2, MBLR, L3MBTL2 and YAF2. Interacts (via ANK repeats) with RELA (when monomethylated at 'Lys-310'). Interacts with MPHOSPH8. Interacts with CDYL. Interacts with REST only in the presence of CDYL. Part of a complex containing at least CDYL, REST, WIZ, SETB1, EHMT1 and EHMT2. Interacts with BAZ2B. Widely expressed.

It localises to the nucleus. It is found in the chromosome. The catalysed reaction is N(6)-methyl-L-lysyl(9)-[histone H3] + S-adenosyl-L-methionine = N(6),N(6)-dimethyl-L-lysyl(9)-[histone H3] + S-adenosyl-L-homocysteine + H(+). It carries out the reaction L-lysyl(9)-[histone H3] + S-adenosyl-L-methionine = N(6)-methyl-L-lysyl(9)-[histone H3] + S-adenosyl-L-homocysteine + H(+). Methyltransferase activity is inhibited by BIX-01294. Efficiently inhibited by compound E72, a BIX-01294 derivative in which the diazepane ring and the benzyl are replaced with a 3-dimethylaminopropyl and a 5-aminopentyl group at sites B and C, respectively. In terms of biological role, histone methyltransferase that specifically mono- and dimethylates 'Lys-9' of histone H3 (H3K9me1 and H3K9me2, respectively) in euchromatin. H3K9me represents a specific tag for epigenetic transcriptional repression by recruiting HP1 proteins to methylated histones. Also weakly methylates 'Lys-27' of histone H3 (H3K27me). Also required for DNA methylation, the histone methyltransferase activity is not required for DNA methylation, suggesting that these 2 activities function independently. Probably targeted to histone H3 by different DNA-binding proteins like E2F6, MGA, MAX and/or DP1. During G0 phase, it probably contributes to silencing of MYC- and E2F-responsive genes, suggesting a role in G0/G1 transition in cell cycle. In addition to the histone methyltransferase activity, also methylates non-histone proteins: mediates dimethylation of 'Lys-373' of p53/TP53. Represses the expression of mitochondrial function-related genes, perhaps by occupying their promoter regions, working in concert with probable chromatin reader BAZ2B. The sequence is that of Histone-lysine N-methyltransferase EHMT1 (EHMT1) from Homo sapiens (Human).